The sequence spans 360 residues: 3-dehydroquinate synthase (360 aa).

NAD(+)-binding positions include 71–76 (DGEQYK), 105–109 (GVVGD), 129–130 (TT), K142, K151, and 169–172 (TLNT). Zn(2+)-binding residues include E184, H248, and H265.

The protein belongs to the sugar phosphate cyclases superfamily. Dehydroquinate synthase family. Co(2+) serves as cofactor. Requires Zn(2+) as cofactor. The cofactor is NAD(+).

The protein resides in the cytoplasm. It catalyses the reaction 7-phospho-2-dehydro-3-deoxy-D-arabino-heptonate = 3-dehydroquinate + phosphate. Its pathway is metabolic intermediate biosynthesis; chorismate biosynthesis; chorismate from D-erythrose 4-phosphate and phosphoenolpyruvate: step 2/7. Functionally, catalyzes the conversion of 3-deoxy-D-arabino-heptulosonate 7-phosphate (DAHP) to dehydroquinate (DHQ). In Coxiella burnetii (strain CbuG_Q212) (Coxiella burnetii (strain Q212)), this protein is 3-dehydroquinate synthase.